The chain runs to 447 residues: Adenylosuccinate synthetase (447 aa).

GTP is bound by residues 12–18 (GDEGKGK) and 40–42 (GHT). The active-site Proton acceptor is D13. Residues D13 and G40 each coordinate Mg(2+). Residues 13 to 16 (DEGK), 38 to 41 (NAGH), T128, R142, Q223, T238, and R302 each bind IMP. H41 (proton donor) is an active-site residue. Substrate is bound at residue 298–304 (TTTGRKR). Residues R304, 330–332 (KLD), and 412–414 (SLG) contribute to the GTP site.

This sequence belongs to the adenylosuccinate synthetase family. In terms of assembly, homodimer. It depends on Mg(2+) as a cofactor.

The protein resides in the cytoplasm. The catalysed reaction is IMP + L-aspartate + GTP = N(6)-(1,2-dicarboxyethyl)-AMP + GDP + phosphate + 2 H(+). It functions in the pathway purine metabolism; AMP biosynthesis via de novo pathway; AMP from IMP: step 1/2. Plays an important role in the de novo pathway of purine nucleotide biosynthesis. Catalyzes the first committed step in the biosynthesis of AMP from IMP. This chain is Adenylosuccinate synthetase, found in Nostoc punctiforme (strain ATCC 29133 / PCC 73102).